The sequence spans 358 residues: Beta-lactamase (358 aa).

Serine 60 serves as the catalytic Acyl-ester intermediate. Tyrosine 146 (proton acceptor) is an active-site residue. 311-313 (KTG) provides a ligand contact to substrate.

This sequence belongs to the class-C beta-lactamase family.

The protein localises to the periplasm. The catalysed reaction is a beta-lactam + H2O = a substituted beta-amino acid. In terms of biological role, this protein is a serine beta-lactamase with a substrate specificity for cephalosporins. This is Beta-lactamase from Pseudomonas fluorescens.